A 404-amino-acid chain; its full sequence is MKLPIYLDYAATTPVDPRVAEKMFQCMTMDGIFGNPASRSHRYGWQAEEAVDIARNQIAELINADHREIVFTSGATESNNLAIKGVAHFYHKKGKHIITSKTEHKAVLDTCRQLEREGFEVTYLEPAANGIIPMERLEAAMRDDTILVSIMHVNNEIGVIHDIDAIGELCRSKGIIFHMDAAQSAGKVPIDVQATKVDLISISGHKMYGPKGIGALYVRRKPRIRLEAQMHGGGHERGMRSGTLPTHQIVGLGEAAAIAKAEMASDDARIGALRDKLWNGIKHIEETYINGDAIERVSGSLNVSFNYVEGESLMMALKDLAVSSGSACTSASLEPSYVLRALGLNDEMAHSSIRFSIGRFTTEEEIDHAIEVITQSIDKLREMSPLWEMFKDGIDLNQVQWAHH.

Residues 75 to 76 (AT), Asn155, Gln183, and 203 to 205 (SGH) each bind pyridoxal 5'-phosphate. Residue Lys206 is modified to N6-(pyridoxal phosphate)lysine. Residue Thr243 participates in pyridoxal 5'-phosphate binding. The Cysteine persulfide intermediate role is filled by Cys328. Cys328 provides a ligand contact to [2Fe-2S] cluster.

Belongs to the class-V pyridoxal-phosphate-dependent aminotransferase family. NifS/IscS subfamily. In terms of assembly, homodimer. Forms a heterotetramer with IscU, interacts with other sulfur acceptors. Pyridoxal 5'-phosphate is required as a cofactor.

It is found in the cytoplasm. It catalyses the reaction (sulfur carrier)-H + L-cysteine = (sulfur carrier)-SH + L-alanine. The protein operates within cofactor biosynthesis; iron-sulfur cluster biosynthesis. Its function is as follows. Master enzyme that delivers sulfur to a number of partners involved in Fe-S cluster assembly, tRNA modification or cofactor biosynthesis. Catalyzes the removal of elemental sulfur atoms from cysteine to produce alanine. Functions as a sulfur delivery protein for Fe-S cluster synthesis onto IscU, an Fe-S scaffold assembly protein, as well as other S acceptor proteins. The protein is Cysteine desulfurase IscS of Shewanella baltica (strain OS185).